Consider the following 248-residue polypeptide: Ribosomal RNA small subunit methyltransferase J (248 aa).

S-adenosyl-L-methionine contacts are provided by residues 98-99 (RD), 114-115 (ER), 150-151 (SS), and Asp-168.

The protein belongs to the methyltransferase superfamily. RsmJ family.

Its subcellular location is the cytoplasm. It carries out the reaction guanosine(1516) in 16S rRNA + S-adenosyl-L-methionine = N(2)-methylguanosine(1516) in 16S rRNA + S-adenosyl-L-homocysteine + H(+). In terms of biological role, specifically methylates the guanosine in position 1516 of 16S rRNA. This chain is Ribosomal RNA small subunit methyltransferase J, found in Shewanella amazonensis (strain ATCC BAA-1098 / SB2B).